The chain runs to 504 residues: Serine O-succinyltransferase (504 aa).

A mitochondrion-targeting transit peptide spans 1-26 (MLRASSKRLQLSWQVFRRFQSSNPQL). The tract at residues 49–70 (QACPNSVDPSASITSPSLSSGP) is disordered. Residues 57-70 (PSASITSPSLSSGP) show a composition bias toward low complexity. An AB hydrolase-1 domain is found at 117–395 (NAILLHTGLS…SAEEIIKLNE (279 aa)). Residues 124–127 (GLSA) are important for substrate specificity. The Nucleophile role is filled by S221. Residue R290 coordinates substrate. Residues D443 and H480 contribute to the active site. Residue D481 participates in substrate binding.

Belongs to the AB hydrolase superfamily. MetX family.

The protein resides in the mitochondrion. It catalyses the reaction succinyl-CoA + L-serine = O-succinyl-L-serine + CoA. The protein operates within amino-acid biosynthesis; L-cysteine biosynthesis; L-cysteine from L-serine: step 1/2. Its function is as follows. Transfers a succinyl group from succinyl-CoA to L-serine, forming succinyl-L-serine. Also has weak serine acetyl transferase activity and homoserine succinyl transferase activity. This chain is Serine O-succinyltransferase, found in Schizosaccharomyces pombe (strain 972 / ATCC 24843) (Fission yeast).